Consider the following 251-residue polypeptide: Octanoyltransferase (251 aa).

The 182-residue stretch at 56–237 (ADTGDEIWVV…RLIANLDGES (182 aa)) folds into the BPL/LPL catalytic domain. Substrate is bound by residues 96–103 (RGGQITYH), 168–170 (ALG), and 181–183 (GLS). Cys199 functions as the Acyl-thioester intermediate in the catalytic mechanism.

It belongs to the LipB family.

The protein resides in the cytoplasm. It carries out the reaction octanoyl-[ACP] + L-lysyl-[protein] = N(6)-octanoyl-L-lysyl-[protein] + holo-[ACP] + H(+). The protein operates within protein modification; protein lipoylation via endogenous pathway; protein N(6)-(lipoyl)lysine from octanoyl-[acyl-carrier-protein]: step 1/2. Functionally, catalyzes the transfer of endogenously produced octanoic acid from octanoyl-acyl-carrier-protein onto the lipoyl domains of lipoate-dependent enzymes. Lipoyl-ACP can also act as a substrate although octanoyl-ACP is likely to be the physiological substrate. The polypeptide is Octanoyltransferase (Burkholderia ambifaria (strain ATCC BAA-244 / DSM 16087 / CCUG 44356 / LMG 19182 / AMMD) (Burkholderia cepacia (strain AMMD))).